Consider the following 217-residue polypeptide: Monomethylamine corrinoid protein 1 (217 aa).

Positions 1–91 (MANQEIFDKL…ELEKNKKEGE (91 aa)) constitute a B12-binding N-terminal domain. Residues 93-217 (AGLAITFVAE…AAKVALEVMK (125 aa)) form the B12-binding domain. His106 contributes to the methylcob(III)alamin binding site.

In terms of assembly, can form a complex with MtmB.

The protein operates within one-carbon metabolism; methanogenesis from methylamine. Its function is as follows. Acts as a methyl group carrier between MtmB and MtbA. The chain is Monomethylamine corrinoid protein 1 (mtmC1) from Methanosarcina barkeri.